We begin with the raw amino-acid sequence, 114 residues long: Non-specific lipid-transfer protein 1 (114 aa).

The first 25 residues, 1 to 25, serve as a signal peptide directing secretion; sequence MIKGLAITVVAVLAVVQLLARPSDA. Cystine bridges form between C29/C76, C39/C53, C54/C99, and C74/C113.

Belongs to the plant LTP family. In terms of tissue distribution, expressed in seeds and, at very low levels, in pulp of fruit (at protein level).

Functionally, plant non-specific lipid-transfer proteins transfer phospholipids as well as galactolipids across membranes. May play a role in wax or cutin deposition in the cell walls of expanding epidermal cells and certain secretory tissues. The polypeptide is Non-specific lipid-transfer protein 1 (Actinidia chinensis var. chinensis (Chinese soft-hair kiwi)).